Reading from the N-terminus, the 414-residue chain is Isocitrate dehydrogenase [NADP] cytoplasmic (414 aa).

S2 carries the N-acetylserine modification. Y42 carries the phosphotyrosine modification. Residue 75-77 (TIT) coordinates NADP(+). T77 contacts substrate. K81 is modified (N6-acetyllysine). R82 is an NADP(+) binding site. Residues 94–100 (SPNGTIR) and R109 contribute to the substrate site. At K126 the chain carries N6-succinyllysine. Substrate-binding residues include R132 and K212. 3 positions are modified to N6-acetyllysine: K224, K233, and K243. D252 contacts Mn(2+). Position 260 (K260) interacts with NADP(+). The Mn(2+) site is built by D275 and D279. 310–315 (GTVTRH) is a binding site for NADP(+). The residue at position 321 (K321) is an N6-acetyllysine. Residue N328 participates in NADP(+) binding. A Phosphoserine modification is found at S389. K400 is modified (N6-succinyllysine).

The protein belongs to the isocitrate and isopropylmalate dehydrogenases family. Homodimer. It depends on Mg(2+) as a cofactor. Mn(2+) is required as a cofactor. In terms of processing, acetylation at Lys-374 dramatically reduces catalytic activity.

Its subcellular location is the cytoplasm. It is found in the cytosol. It carries out the reaction D-threo-isocitrate + NADP(+) = 2-oxoglutarate + CO2 + NADPH. Functionally, catalyzes the NADP(+)-dependent oxidative decarboxylation of isocitrate (D-threo-isocitrate) to 2-ketoglutarate (2-oxoglutarate), which is required by other enzymes such as the phytanoyl-CoA dioxygenase. Plays a critical role in the generation of NADPH, an important cofactor in many biosynthesis pathways. May act as a corneal epithelial crystallin and may be involved in maintaining corneal epithelial transparency. In Microtus ochrogaster (Prairie vole), this protein is Isocitrate dehydrogenase [NADP] cytoplasmic (IDH1).